Here is a 598-residue protein sequence, read N- to C-terminus: Vacuolin-A (598 aa).

Positions 482 to 539 (IKTTEARLKAETDNIALEQRNKAIISESQAKLSSAQREAESLLITAEAQKKASELQGE) form a coiled coil.

It belongs to the vacuolin family.

The protein localises to the endosome membrane. Its subcellular location is the lysosome. The chain is Vacuolin-A (vacA) from Dictyostelium discoideum (Social amoeba).